The sequence spans 465 residues: Cysteine--tRNA ligase (465 aa).

Cys29 is a Zn(2+) binding site. The 'HIGH' region motif lies at 31 to 41 (PTVYNYIHIGN). Residues Cys209, His234, and Glu238 each contribute to the Zn(2+) site. Positions 266–270 (KMSKS) match the 'KMSKS' region motif. Lys269 contributes to the ATP binding site. Ser270 is modified (phosphoserine).

The protein belongs to the class-I aminoacyl-tRNA synthetase family. Monomer. It depends on Zn(2+) as a cofactor.

Its subcellular location is the cytoplasm. The catalysed reaction is tRNA(Cys) + L-cysteine + ATP = L-cysteinyl-tRNA(Cys) + AMP + diphosphate. This chain is Cysteine--tRNA ligase, found in Bacillus cereus (strain ATCC 10987 / NRS 248).